A 630-amino-acid polypeptide reads, in one-letter code: Alpha-1,4-glucan:maltose-1-phosphate maltosyltransferase (630 aa).

Residues arginine 234, glutamine 294, and aspartate 329 each contribute to the alpha-maltose 1-phosphate site. Aspartate 365 acts as the Nucleophile in catalysis. Asparagine 366 is an alpha-maltose 1-phosphate binding site. Catalysis depends on glutamate 394, which acts as the Proton donor. 504 to 505 (KY) contributes to the alpha-maltose 1-phosphate binding site.

It belongs to the glycosyl hydrolase 13 family. GlgE subfamily. Homodimer.

The enzyme catalyses alpha-maltose 1-phosphate + [(1-&gt;4)-alpha-D-glucosyl](n) = [(1-&gt;4)-alpha-D-glucosyl](n+2) + phosphate. Its function is as follows. Maltosyltransferase that uses maltose 1-phosphate (M1P) as the sugar donor to elongate linear or branched alpha-(1-&gt;4)-glucans. Is involved in a branched alpha-glucan biosynthetic pathway from trehalose, together with TreS, Mak and GlgB. This Picrophilus torridus (strain ATCC 700027 / DSM 9790 / JCM 10055 / NBRC 100828 / KAW 2/3) protein is Alpha-1,4-glucan:maltose-1-phosphate maltosyltransferase.